Consider the following 262-residue polypeptide: Phosphatidylserine decarboxylase proenzyme (262 aa).

Catalysis depends on charge relay system; for autoendoproteolytic cleavage activity residues D86, H142, and S226. Residue S226 is the Schiff-base intermediate with substrate; via pyruvic acid; for decarboxylase activity of the active site. Residue S226 is modified to Pyruvic acid (Ser); by autocatalysis.

Belongs to the phosphatidylserine decarboxylase family. PSD-B subfamily. Prokaryotic type I sub-subfamily. As to quaternary structure, heterodimer of a large membrane-associated beta subunit and a small pyruvoyl-containing alpha subunit. The cofactor is pyruvate. Post-translationally, is synthesized initially as an inactive proenzyme. Formation of the active enzyme involves a self-maturation process in which the active site pyruvoyl group is generated from an internal serine residue via an autocatalytic post-translational modification. Two non-identical subunits are generated from the proenzyme in this reaction, and the pyruvate is formed at the N-terminus of the alpha chain, which is derived from the carboxyl end of the proenzyme. The autoendoproteolytic cleavage occurs by a canonical serine protease mechanism, in which the side chain hydroxyl group of the serine supplies its oxygen atom to form the C-terminus of the beta chain, while the remainder of the serine residue undergoes an oxidative deamination to produce ammonia and the pyruvoyl prosthetic group on the alpha chain. During this reaction, the Ser that is part of the protease active site of the proenzyme becomes the pyruvoyl prosthetic group, which constitutes an essential element of the active site of the mature decarboxylase.

Its subcellular location is the cell membrane. It carries out the reaction a 1,2-diacyl-sn-glycero-3-phospho-L-serine + H(+) = a 1,2-diacyl-sn-glycero-3-phosphoethanolamine + CO2. The protein operates within phospholipid metabolism; phosphatidylethanolamine biosynthesis; phosphatidylethanolamine from CDP-diacylglycerol: step 2/2. Its function is as follows. Catalyzes the formation of phosphatidylethanolamine (PtdEtn) from phosphatidylserine (PtdSer). In Bacillus cereus (strain ZK / E33L), this protein is Phosphatidylserine decarboxylase proenzyme.